Consider the following 116-residue polypeptide: Large ribosomal subunit protein bL19 (116 aa).

This sequence belongs to the bacterial ribosomal protein bL19 family.

Its function is as follows. This protein is located at the 30S-50S ribosomal subunit interface and may play a role in the structure and function of the aminoacyl-tRNA binding site. In Actinobacillus succinogenes (strain ATCC 55618 / DSM 22257 / CCUG 43843 / 130Z), this protein is Large ribosomal subunit protein bL19.